A 137-amino-acid polypeptide reads, in one-letter code: Ribosomal RNA large subunit methyltransferase H (137 aa).

S-adenosyl-L-methionine contacts are provided by residues L56, G85, and 104–109 (LSPLTF).

The protein belongs to the RNA methyltransferase RlmH family. Homodimer.

Its subcellular location is the cytoplasm. It catalyses the reaction pseudouridine(1915) in 23S rRNA + S-adenosyl-L-methionine = N(3)-methylpseudouridine(1915) in 23S rRNA + S-adenosyl-L-homocysteine + H(+). Its function is as follows. Specifically methylates the pseudouridine at position 1915 (m3Psi1915) in 23S rRNA. This is Ribosomal RNA large subunit methyltransferase H from Prochlorococcus marinus subsp. pastoris (strain CCMP1986 / NIES-2087 / MED4).